A 152-amino-acid polypeptide reads, in one-letter code: Mid1-interacting protein 1A (152 aa).

A compositionally biased stretch (basic and acidic residues) spans 87 to 105 (SEDQRRKKDTSASEPVRTE). The segment at 87–109 (SEDQRRKKDTSASEPVRTEEESD) is disordered.

Belongs to the SPOT14 family. Expressed for a short period in the cells that will produce the enveloping layer (EVL).

It localises to the nucleus. It is found in the cytoplasm. The protein localises to the cytoskeleton. Involved in stabilization of microtubules. May play a role in the regulation of lipogenesis. The protein is Mid1-interacting protein 1A (mid1ip1a) of Danio rerio (Zebrafish).